A 342-amino-acid polypeptide reads, in one-letter code: Delta(6)-protoilludene synthase (342 aa).

The Mg(2+) site is built by D81, N217, S221, and E225. Positions 81 to 85 (DEYSD) match the DDXXD motif motif. R306 and Y307 together coordinate (2E,6E)-farnesyl diphosphate.

This sequence belongs to the terpene synthase family. Mg(2+) serves as cofactor.

It catalyses the reaction (2E,6E)-farnesyl diphosphate = Delta(6)-protoilludene + diphosphate. Delta(6)-protoilludene synthase, part of the gene cluster that mediates the biosynthesis of melleolides, a range of antifungal and phytotoxic polyketide derivatives composed of an orsellinic acid (OA) moiety esterified to various sesquiterpene alcohols. The first step in melleolides biosynthesis is performed by the delta(6)-protoilludene synthase PRO1 which catalyzes the cyclization of farnesyl diphosphate to protoilludene. The orsellinic acid synthase armB produces OA by condensing acetyl-CoA with 3 malonyl-CoA units in a three-round chain elongation reaction folowed by a C2-C7 ring closure. ArmB further catalyzes the trans-esterification of OA to the various sesquiterpene alcohols resulting from the hydroxylation of protoilludene. The melleolides cluster also includes 5 cytochrome P450 monooxygenases, 4 NAD(+)-dependent oxidoreductases, one flavin-dependent oxidoreductase, and one O-methyltransferase. The cytochrome P450 monooxygenases may be involved in protoilludene hydroxylation to elaborate melleolides with multiple alcohol groups, such as melleolide D, which carries alcohol functionalities at C-4, C-5, C-10, and C-13. The role of the NAD(+)-dependent enzymes remains unknown. Numerous melleolides, including arnamial, show 5'-O-methylation of the aromatic moiety which may be catalyzed by the methyltransferase encoded in the cluster. The flavin-dependent oxidoreductase might represent the dehydrogenase yielding the aldehyde in position 1 of arnamial and other melleolides. Finally, several halogenases, localized outside of the cluster, are able to catalyze the transfer of a single chlorine atom to the melleolide backbone, resulting in a 6'-chloromelleolide product. This Armillaria ostoyae (Armillaria root rot fungus) protein is Delta(6)-protoilludene synthase.